Here is a 119-residue protein sequence, read N- to C-terminus: MVKLAFPRELRLLTPSHFTFVFQQPQRAGTPQITILGRLNELGHPRIGLTVAKKHVKRAHERNRIKRLARESFRLHQHTLPSMDFVVLVKKGVADLDNRALTEALEKLWRRHCRQAPAS.

Belongs to the RnpA family. In terms of assembly, consists of a catalytic RNA component (M1 or rnpB) and a protein subunit.

The enzyme catalyses Endonucleolytic cleavage of RNA, removing 5'-extranucleotides from tRNA precursor.. Its function is as follows. RNaseP catalyzes the removal of the 5'-leader sequence from pre-tRNA to produce the mature 5'-terminus. It can also cleave other RNA substrates such as 4.5S RNA. The protein component plays an auxiliary but essential role in vivo by binding to the 5'-leader sequence and broadening the substrate specificity of the ribozyme. This Yersinia enterocolitica serotype O:8 / biotype 1B (strain NCTC 13174 / 8081) protein is Ribonuclease P protein component.